The chain runs to 60 residues: Large ribosomal subunit protein uL30 (60 aa).

Belongs to the universal ribosomal protein uL30 family. Part of the 50S ribosomal subunit.

In Clavibacter michiganensis subsp. michiganensis (strain NCPPB 382), this protein is Large ribosomal subunit protein uL30.